We begin with the raw amino-acid sequence, 96 residues long: Conantokin Rl-C (96 aa).

The N-terminal stretch at 1 to 21 is a signal peptide; it reads MQLYTYLYLLVPLVTFHLILG. Positions 22 to 78 are excised as a propeptide; sequence TGTLDHGDALTERRSADATALKPEPVLLQKSSARSTDDNGKDTQMKRIFKKRRNKAR. A disordered region spans residues 36–85; sequence SADATALKPEPVLLQKSSARSTDDNGKDTQMKRIFKKRRNKARGEEELSE. Residues 56–66 show a composition bias toward basic and acidic residues; the sequence is STDDNGKDTQM. Glu-81 is an a divalent metal cation binding site. 4-carboxyglutamate occurs at positions 81, 82, 85, 89, and 93. Glu-85, Glu-89, and Glu-93 together coordinate a divalent metal cation. Asn-96 is modified (asparagine amide).

This sequence belongs to the conotoxin B superfamily. The cofactor is Ca(2+). Requires Mg(2+) as cofactor. Expressed by the venom duct.

It localises to the secreted. Functionally, conantokins inhibit N-methyl-D-aspartate (NMDA) receptors. This toxin has antagonist activity on NR2B/GRIN2B (IC(50)=1.4 uM) and NR2A/GRIN2A (IC(50)=2.9 uM) subunits, when tested on rat receptors. In Conus rolani (Cone snail), this protein is Conantokin Rl-C.